Here is a 197-residue protein sequence, read N- to C-terminus: Baseplate puncturing device gp45 (197 aa).

The segment at 172–197 (DAIINGKSTDKHIHRGDSGGTTGPMQ) is disordered. Residues 179 to 188 (STDKHIHRGD) are compositionally biased toward basic and acidic residues. 2 residues coordinate Fe cation: His-183 and His-185. Ca(2+) is bound by residues Asp-188 and Ser-189. Asp-188 contacts chloride.

In terms of assembly, homotrimer. Part of a complex composed of three DNA circularization protein N, three baseplate hub protein gp44 and three sub-complex wedge (made of two copies of each baseplate protein gp46, gp47 and gp48) that forms the baseplate. Ca(2+) is required as a cofactor. The cofactor is chloride. Requires Fe cation as cofactor.

Its subcellular location is the virion. It localises to the host cytoplasm. In terms of biological role, component of the baseplate that forms a central needlelike spike used to puncture the host cell membrane for tube insertion during virus entry. Probably involved in baseplate and tail assembly. Serves as the distal plug of tail tube channel and might regulate the process of the phage DNA and protein ejection into the host cell. In Escherichia phage Mu (Bacteriophage Mu), this protein is Baseplate puncturing device gp45.